The sequence spans 728 residues: Catalase-peroxidase (728 aa).

A cross-link (tryptophyl-tyrosyl-methioninium (Trp-Tyr) (with M-251)) is located at residues 97-225 (WHSAGTYRIA…LAAVMMGLIY (129 aa)). His-98 serves as the catalytic Proton acceptor. The segment at residues 225–251 (YVNPEGVDGNPDPLRTAQDIRITFARM) is a cross-link (tryptophyl-tyrosyl-methioninium (Tyr-Met) (with W-97)). His-266 contacts heme b.

Belongs to the peroxidase family. Peroxidase/catalase subfamily. Homodimer or homotetramer. Heme b serves as cofactor. Formation of the three residue Trp-Tyr-Met cross-link is important for the catalase, but not the peroxidase activity of the enzyme.

The catalysed reaction is H2O2 + AH2 = A + 2 H2O. It catalyses the reaction 2 H2O2 = O2 + 2 H2O. In terms of biological role, bifunctional enzyme with both catalase and broad-spectrum peroxidase activity. This is Catalase-peroxidase from Shewanella putrefaciens (strain CN-32 / ATCC BAA-453).